The primary structure comprises 284 residues: Ribosomal RNA small subunit methyltransferase A (284 aa).

Positions 22, 24, 49, 70, 97, and 117 each coordinate S-adenosyl-L-methionine.

It belongs to the class I-like SAM-binding methyltransferase superfamily. rRNA adenine N(6)-methyltransferase family. RsmA subfamily.

Its subcellular location is the cytoplasm. It carries out the reaction adenosine(1518)/adenosine(1519) in 16S rRNA + 4 S-adenosyl-L-methionine = N(6)-dimethyladenosine(1518)/N(6)-dimethyladenosine(1519) in 16S rRNA + 4 S-adenosyl-L-homocysteine + 4 H(+). Its function is as follows. Specifically dimethylates two adjacent adenosines (A1518 and A1519) in the loop of a conserved hairpin near the 3'-end of 16S rRNA in the 30S particle. May play a critical role in biogenesis of 30S subunits. This is Ribosomal RNA small subunit methyltransferase A from Desulforapulum autotrophicum (strain ATCC 43914 / DSM 3382 / VKM B-1955 / HRM2) (Desulfobacterium autotrophicum).